A 68-amino-acid chain; its full sequence is Small integral membrane protein 10-like protein 1 (68 aa).

Residues 1 to 21 (MAPAAAPSSLAVRASSPAATP) form a disordered region.

In Homo sapiens (Human), this protein is Small integral membrane protein 10-like protein 1.